The following is a 552-amino-acid chain: MKSISKVEEVLEPISKIAEKIGLDEDEIELYGKYKAKISLDILKKKAQLQEGKVILVTSINPTPFGEGKTTTAIGLSMAINRLGFKSIVTLREPSLGPFLGLKGGATGGGASQILPSIDINLHFTGDIHAVTSANNLLCAAVDNHIYHGNRLGINPKSITIKRAMDMNDRSLRHIIVGLSNDQKGAIREDGFVISVASEVMAVLCLSMSYDDLKEKLGNILVGFTYDKKPVYAKDLNVHGSMALLLKDALKPNLVQTSENTAAIVHGGPFANIAHGTNSIVATKIAQKLSEYVVVEAGFGSDLGAEKFINIVARKSGIYPQAAVLVVTVKALKHHAKIEENSGLQSGVNSIQQGLENLEKHIENLKVMGLETVVALNKFPDDKDEEIELIRSFCEEMGVEFSVSSAYTHGSEGVLELAEKVIRLSDKRKRINFVYQDSDFIEEKIKKVATIIYGAKDVKFSKAALSKLELIKNLKVEHFPICMSKTQYSLSDDPKLLGKPKDFILNVTDIEIKNGAGFIVVMCGDIIAMPGLGKDFAALHLDIDSSGNPIFK.

ATP is bound at residue 63–70 (TPFGEGKT).

Belongs to the formate--tetrahydrofolate ligase family.

It carries out the reaction (6S)-5,6,7,8-tetrahydrofolate + formate + ATP = (6R)-10-formyltetrahydrofolate + ADP + phosphate. The protein operates within one-carbon metabolism; tetrahydrofolate interconversion. The sequence is that of Formate--tetrahydrofolate ligase from Caldicellulosiruptor bescii (strain ATCC BAA-1888 / DSM 6725 / KCTC 15123 / Z-1320) (Anaerocellum thermophilum).